The following is a 686-amino-acid chain: Gamma-aminobutyric acid receptor alpha-like (686 aa).

Positions 1–58 are cleaved as a signal peptide; the sequence is MCTMPATRDASGSGDASTDLIAARSLSSHQGQRSNLRIFKLLISCCLLMLCIYPNAWP. At 97–393 the chain is on the extracellular side; sequence SSWLTQSNNH…NFHLQRHMGN (297 aa). Asn108 is a glycosylation site (N-linked (GlcNAc...) asparagine). A disulfide bond links Cys233 and Cys247. Asn292 is a glycosylation site (N-linked (GlcNAc...) asparagine). Transmembrane regions (helical) follow at residues 394–414, 424–441, and 456–476; these read FLIQVYGPCCLLVVLSWVSFW, VSLGITTVLTMTFLGLEA, and FFVFLSFGFIFATILQFAVVH. Topologically, residues 477–650 are cytoplasmic; it reads YYTKYGSGEC…YNSVSKIDRA (174 aa). Residues 570–641 form a disordered region; it reads KPPRADSDED…RRKGKRTPQY (72 aa). Residues 586–596 are compositionally biased toward polar residues; sequence QLRANEAPTTS. Residues 597-609 show a composition bias toward low complexity; it reads AAAAAAQAAAQAA. A helical transmembrane segment spans residues 651–671; it reads SRIVFPLLFILINVFYWYGYL.

It belongs to the ligand-gated ion channel (TC 1.A.9) family. Gamma-aminobutyric acid receptor (TC 1.A.9.5) subfamily. Generally pentameric. There are five types of GABA(A) receptor chains: alpha, beta, gamma, delta, and rho. Interacts with Lcch3 (beta chain).

It is found in the postsynaptic cell membrane. The protein resides in the cell membrane. Its function is as follows. GABA, an inhibitory neurotransmitter, mediates neuronal inhibition by binding to the GABA receptor and opening an integral chloride channel. May combine with the ligand-gated ion channel subunit Lcch3 to form cation-selective GABA-gated ion channels. The sequence is that of Gamma-aminobutyric acid receptor alpha-like (Grd) from Drosophila melanogaster (Fruit fly).